A 576-amino-acid polypeptide reads, in one-letter code: Arginine--tRNA ligase (576 aa).

The 'HIGH' region motif lies at 126-136 (ANPTGPMHIGH).

It belongs to the class-I aminoacyl-tRNA synthetase family. Monomer.

Its subcellular location is the cytoplasm. The catalysed reaction is tRNA(Arg) + L-arginine + ATP = L-arginyl-tRNA(Arg) + AMP + diphosphate. This Rickettsia akari (strain Hartford) protein is Arginine--tRNA ligase.